The sequence spans 219 residues: Ras-related protein Rab-3D (219 aa).

A2 carries the N-acetylalanine modification. Residue G29 to S37 participates in GDP binding. GTP-binding residues include S31, S32, V33, G34, K35, T36, S37, P49, and S53. T36 provides a ligand contact to Mg(2+). A Switch 1 motif is present at residues P49–D58. Residues T54 and D77 each contribute to the Mg(2+) site. G80 is a binding site for GTP. The Switch 2 signature appears at G80–M96. At T86 the chain carries Phosphothreonine; by LRRK2. Positions 135, 136, 138, 166, and 167 each coordinate GTP. GDP contacts are provided by residues N135–D138 and S165–K167. At S190 the chain carries Phosphoserine. The segment at S190 to C219 is disordered. Residues P193–G203 show a composition bias toward low complexity. Positions T209–C219 are enriched in pro residues. Residues C217 and C219 are each lipidated (S-geranylgeranyl cysteine). Residue C219 is modified to Cysteine methyl ester.

The protein belongs to the small GTPase superfamily. Rab family. As to quaternary structure, interacts with RIMS1, RIMS2, RPH3A, RPH3AL and RAB3IP. The GTP-bound form interacts with REP15. Interacts with CHM and CHML; phosphorylation at Thr-86 disrupts these interactions. Interacts with MADD (via uDENN domain); the GTP-bound form is preferred for interaction. Mg(2+) serves as cofactor. Post-translationally, phosphorylation of Thr-86 in the switch II region by LRRK2 prevents the association of RAB regulatory proteins, including CHM and CHML. As to expression, predominantly expressed in the adipocyte tissue, but is also expressed in several other organs including skin, spleen, heart and lung.

It localises to the cell membrane. The catalysed reaction is GTP + H2O = GDP + phosphate + H(+). With respect to regulation, regulated by guanine nucleotide exchange factors (GEFs) which promote the exchange of bound GDP for free GTP. Regulated by GTPase activating proteins (GAPs) which increase the GTP hydrolysis activity. Inhibited by GDP dissociation inhibitors (GDIs) which prevent Rab-GDP dissociation. Functionally, the small GTPases Rab are key regulators of intracellular membrane trafficking, from the formation of transport vesicles to their fusion with membranes. Rabs cycle between an inactive GDP-bound form and an active GTP-bound form that is able to recruit to membranes different sets of downstream effectors directly responsible for vesicle formation, movement, tethering and fusion. RAB3D may be involved in the insulin-induced exocytosis of GLUT4-containing vesicles in adipocytes. The chain is Ras-related protein Rab-3D from Mus musculus (Mouse).